Consider the following 234-residue polypeptide: Enolase-phosphatase E1 (234 aa).

Mg(2+) is bound by residues Asp-10 and Glu-12. Substrate contacts are provided by residues 125–126 (SS) and Lys-162. Asp-188 is a Mg(2+) binding site.

It belongs to the HAD-like hydrolase superfamily. MasA/MtnC family. Monomer. Mg(2+) is required as a cofactor.

Its subcellular location is the cytoplasm. The protein resides in the nucleus. It carries out the reaction 5-methylsulfanyl-2,3-dioxopentyl phosphate + H2O = 1,2-dihydroxy-5-(methylsulfanyl)pent-1-en-3-one + phosphate. Its pathway is amino-acid biosynthesis; L-methionine biosynthesis via salvage pathway; L-methionine from S-methyl-5-thio-alpha-D-ribose 1-phosphate: step 3/6. It functions in the pathway amino-acid biosynthesis; L-methionine biosynthesis via salvage pathway; L-methionine from S-methyl-5-thio-alpha-D-ribose 1-phosphate: step 4/6. Bifunctional enzyme that catalyzes the enolization of 2,3-diketo-5-methylthiopentyl-1-phosphate (DK-MTP-1-P) into the intermediate 2-hydroxy-3-keto-5-methylthiopentenyl-1-phosphate (HK-MTPenyl-1-P), which is then dephosphorylated to form the acireductone 1,2-dihydroxy-3-keto-5-methylthiopentene (DHK-MTPene). The polypeptide is Enolase-phosphatase E1 (Sordaria macrospora (strain ATCC MYA-333 / DSM 997 / K(L3346) / K-hell)).